Here is a 529-residue protein sequence, read N- to C-terminus: Pre-rRNA-processing protein pro-1 (529 aa).

2 WD repeats span residues 136-175 and 287-326; these read AHYQNITKIVISDDDSMIFTASKDGAVHGYLVTDLVSADR and GHSDEISRLAINTDGTLLASGDASGKYCIWEISSHQCLKV. Residues 416-518 are a coiled coil; sequence ARNEAAKAEK…LKEINKQMYE (103 aa). A disordered region spans residues 436 to 470; it reads TLGDDEDDAPEVGNQRRKSGKKNKKNRKNQKKNDF. Residues 450-465 show a composition bias toward basic residues; it reads QRRKSGKKNKKNRKNQ.

This sequence belongs to the WD repeat IPI3/WDR18 family. As to quaternary structure, component of the PELP1 complex, composed of at least PELP1, TEX10 and WDR18. The complex interacts with pre-60S ribosome particles.

It is found in the nucleus. It localises to the nucleolus. Its subcellular location is the nucleoplasm. Functionally, component of the PELP1 complex involved in the nucleolar steps of 28S rRNA maturation and the subsequent nucleoplasmic transit of the pre-60S ribosomal subunit. Required for processing ITS2 sequences from rRNA intermediates during 26S rRNA maturation. Required in the soma to promote normal proliferation and prevent germline tumor formation. In Caenorhabditis elegans, this protein is Pre-rRNA-processing protein pro-1.